A 134-amino-acid chain; its full sequence is Outer membrane lipoprotein RcsF (134 aa).

The N-terminal stretch at 1 to 15 (MRALPICLVALMLSG) is a signal peptide. Residue C16 is the site of N-palmitoyl cysteine attachment. Residue C16 is the site of S-diacylglycerol cysteine attachment. Disordered regions lie at residues 22–48 (SPVE…RATP) and 67–88 (GEVS…IPTA). Positions 72–82 (DSCQASNQDSP) are enriched in polar residues. 2 cysteine pairs are disulfide-bonded: C74/C118 and C109/C124.

It belongs to the RcsF family.

The protein resides in the cell outer membrane. Its function is as follows. Essential component of the Rcs signaling system, which controls transcription of numerous genes. Plays a role in signal transduction from the cell surface to the histidine kinase RcsC. May detect outer membrane defects. This Escherichia coli O6:H1 (strain CFT073 / ATCC 700928 / UPEC) protein is Outer membrane lipoprotein RcsF.